The sequence spans 238 residues: Sugar fermentation stimulation protein homolog (238 aa).

It belongs to the SfsA family.

The sequence is that of Sugar fermentation stimulation protein homolog from Alkalilimnicola ehrlichii (strain ATCC BAA-1101 / DSM 17681 / MLHE-1).